We begin with the raw amino-acid sequence, 434 residues long: Chaperone SurA (434 aa).

The signal sequence occupies residues 1–22; it reads MKHSKKIVTALLALAMSQTVMA. 2 PpiC domains span residues 173-274 and 283-383; these read EVEF…KVMD and VEEV…QLMD.

It localises to the periplasm. It carries out the reaction [protein]-peptidylproline (omega=180) = [protein]-peptidylproline (omega=0). In terms of biological role, chaperone involved in the correct folding and assembly of outer membrane proteins. Recognizes specific patterns of aromatic residues and the orientation of their side chains, which are found more frequently in integral outer membrane proteins. May act in both early periplasmic and late outer membrane-associated steps of protein maturation. In Shewanella denitrificans (strain OS217 / ATCC BAA-1090 / DSM 15013), this protein is Chaperone SurA.